We begin with the raw amino-acid sequence, 486 residues long: Glutamyl-tRNA(Gln) amidotransferase subunit A (486 aa).

Active-site charge relay system residues include lysine 74 and serine 149. The active-site Acyl-ester intermediate is the serine 173.

It belongs to the amidase family. GatA subfamily. In terms of assembly, heterotrimer of A, B and C subunits.

The catalysed reaction is L-glutamyl-tRNA(Gln) + L-glutamine + ATP + H2O = L-glutaminyl-tRNA(Gln) + L-glutamate + ADP + phosphate + H(+). Functionally, allows the formation of correctly charged Gln-tRNA(Gln) through the transamidation of misacylated Glu-tRNA(Gln) in organisms which lack glutaminyl-tRNA synthetase. The reaction takes place in the presence of glutamine and ATP through an activated gamma-phospho-Glu-tRNA(Gln). The sequence is that of Glutamyl-tRNA(Gln) amidotransferase subunit A from Prochlorococcus marinus (strain MIT 9313).